We begin with the raw amino-acid sequence, 172 residues long: Small ribosomal subunit protein uS5 (172 aa).

The 64-residue stretch at 16-79 (LKDRLVAINR…ESAKKNLVKV (64 aa)) folds into the S5 DRBM domain.

It belongs to the universal ribosomal protein uS5 family. Part of the 30S ribosomal subunit. Contacts proteins S4 and S8.

Functionally, with S4 and S12 plays an important role in translational accuracy. Located at the back of the 30S subunit body where it stabilizes the conformation of the head with respect to the body. The polypeptide is Small ribosomal subunit protein uS5 (Bacteroides thetaiotaomicron (strain ATCC 29148 / DSM 2079 / JCM 5827 / CCUG 10774 / NCTC 10582 / VPI-5482 / E50)).